The chain runs to 274 residues: Nitrate import ATP-binding protein NrtD (274 aa).

Residues 17–250 enclose the ABC transporter domain; the sequence is LHFDCVGKTF…RPREREAVVE (234 aa). 53 to 60 is an ATP binding site; it reads GHSGCGKS.

This sequence belongs to the ABC transporter superfamily. Nitrate/nitrite/cyanate uptake transporter (NitT) (TC 3.A.1.16) family. As to quaternary structure, the complex is composed of two ATP-binding proteins (NrtC and NrtD), two transmembrane proteins (NrtB) and a solute-binding protein (NrtA).

Its subcellular location is the cell inner membrane. The enzyme catalyses nitrate(out) + ATP + H2O = nitrate(in) + ADP + phosphate + H(+). Part of the ABC transporter complex NrtABCD involved in nitrate uptake. The complex is probably also involved in nitrite transport. Probably responsible for energy coupling to the transport system. This is Nitrate import ATP-binding protein NrtD from Synechococcus elongatus (strain ATCC 33912 / PCC 7942 / FACHB-805) (Anacystis nidulans R2).